The chain runs to 274 residues: 2,3,4,5-tetrahydropyridine-2,6-dicarboxylate N-succinyltransferase (274 aa).

Positions 107 and 144 each coordinate substrate.

It belongs to the transferase hexapeptide repeat family. Homotrimer.

It is found in the cytoplasm. It carries out the reaction (S)-2,3,4,5-tetrahydrodipicolinate + succinyl-CoA + H2O = (S)-2-succinylamino-6-oxoheptanedioate + CoA. Its pathway is amino-acid biosynthesis; L-lysine biosynthesis via DAP pathway; LL-2,6-diaminopimelate from (S)-tetrahydrodipicolinate (succinylase route): step 1/3. The sequence is that of 2,3,4,5-tetrahydropyridine-2,6-dicarboxylate N-succinyltransferase from Paracoccus denitrificans (strain Pd 1222).